Consider the following 270-residue polypeptide: Type III pantothenate kinase (270 aa).

16 to 23 (EIGNTTAM) contacts ATP. Substrate-binding positions include Tyr106 and 113–116 (GADR). The active-site Proton acceptor is Asp115. Asp136 lines the K(+) pocket. Position 139 (Thr139) interacts with ATP. Thr191 contacts substrate.

It belongs to the type III pantothenate kinase family. As to quaternary structure, homodimer. NH4(+) serves as cofactor. Requires K(+) as cofactor.

The protein localises to the cytoplasm. It catalyses the reaction (R)-pantothenate + ATP = (R)-4'-phosphopantothenate + ADP + H(+). It functions in the pathway cofactor biosynthesis; coenzyme A biosynthesis; CoA from (R)-pantothenate: step 1/5. Catalyzes the phosphorylation of pantothenate (Pan), the first step in CoA biosynthesis. This Chlorobium luteolum (strain DSM 273 / BCRC 81028 / 2530) (Pelodictyon luteolum) protein is Type III pantothenate kinase.